Reading from the N-terminus, the 390-residue chain is NADH-quinone oxidoreductase subunit D (390 aa).

It belongs to the complex I 49 kDa subunit family. In terms of assembly, NDH-1 is composed of 14 different subunits. Subunits NuoB, C, D, E, F, and G constitute the peripheral sector of the complex.

It is found in the cell inner membrane. The enzyme catalyses a quinone + NADH + 5 H(+)(in) = a quinol + NAD(+) + 4 H(+)(out). Its function is as follows. NDH-1 shuttles electrons from NADH, via FMN and iron-sulfur (Fe-S) centers, to quinones in the respiratory chain. The immediate electron acceptor for the enzyme in this species is believed to be ubiquinone. Couples the redox reaction to proton translocation (for every two electrons transferred, four hydrogen ions are translocated across the cytoplasmic membrane), and thus conserves the redox energy in a proton gradient. The protein is NADH-quinone oxidoreductase subunit D of Geobacter metallireducens (strain ATCC 53774 / DSM 7210 / GS-15).